The chain runs to 703 residues: MARKTPIERYRNIGISAHIDAGKTTTTERILFYTGVNHKIGEVHDGAATMDWMEQEQERGITITSAATTAFWKGMGGNYPEHRFNIIDTPGHVDFTIEVERSMRVLDGACMVYCAVGGVQPQSETVWRQANKYGVPRLAFVNKMDRTGANFFKVYDQLKTRLKANPVPVVVPIGAEDGFQGVVDLLEMKAIIWDEASQGVKFEYKDIPAELQATAEEWREKMVESAAEASEALMEKYLGGEELTRAEIVKALRDRTIACEIQPMLCGTAFKNKGVQRMLDAVIDFLPSPVDIPPVKGVDENDDEKKLERKADDNEKFSALAFKIMTDPFVGQLIFFRVYSGKINSGDTVYNPVKQKKERLGRILQMHANQREEIKEVLAGDIAAAVGLKDATTGDTLCDPTAPIVLERMVFPEPVISQAVEPKTKADQEKMGIALNRLAAEDPSFRVRTDEESGQTIISGMGELHLEILVDRMKREFGVEANIGAPQVAYRETIRKKAEDVEGKFVKQSGGRGQYGHAVITLEPQEPGKGFEFVDAIKGGVIPREYIPAVEKGIVDTLPSGILAGFPVVDVKVTLTFGSYHDVDSNENAFRMAGSMAFKDAMRKASPVLLEPMMAVEVETPEDYTGTVMGDLSSRRGIVQGMDDMVGGGKIIKAEVPLSEMFGYSTSLRSATQGRATYTMEFKHYSEAPKNIAEAVMAAKGTK.

The tr-type G domain occupies 8–290; the sequence is ERYRNIGISA…AVIDFLPSPV (283 aa). Residues 17 to 24, 88 to 92, and 142 to 145 contribute to the GTP site; these read AHIDAGKT, DTPGH, and NKMD.

This sequence belongs to the TRAFAC class translation factor GTPase superfamily. Classic translation factor GTPase family. EF-G/EF-2 subfamily.

The protein resides in the cytoplasm. In terms of biological role, catalyzes the GTP-dependent ribosomal translocation step during translation elongation. During this step, the ribosome changes from the pre-translocational (PRE) to the post-translocational (POST) state as the newly formed A-site-bound peptidyl-tRNA and P-site-bound deacylated tRNA move to the P and E sites, respectively. Catalyzes the coordinated movement of the two tRNA molecules, the mRNA and conformational changes in the ribosome. The polypeptide is Elongation factor G 1 (Ralstonia nicotianae (strain ATCC BAA-1114 / GMI1000) (Ralstonia solanacearum)).